Reading from the N-terminus, the 171-residue chain is Dual specificity protein phosphatase OPG106 (171 aa).

Positions 23-171 constitute a Tyrosine-protein phosphatase domain; sequence SPTIMTRVTN…IIEKYVIDKN (149 aa). Catalysis depends on Cys-110, which acts as the Phosphocysteine intermediate.

This sequence belongs to the protein-tyrosine phosphatase family. Non-receptor class dual specificity subfamily. Homodimer.

The protein resides in the virion. The protein localises to the host cytoplasm. The enzyme catalyses O-phospho-L-tyrosyl-[protein] + H2O = L-tyrosyl-[protein] + phosphate. It catalyses the reaction O-phospho-L-seryl-[protein] + H2O = L-seryl-[protein] + phosphate. Serine/tyrosine phosphatase which down-regulates cellular antiviral response by dephosphorylating activated host STAT1 and blocking interferon (IFN)-stimulated innate immune responses. Dephosphorylates the OPG144 protein. This chain is Dual specificity protein phosphatase OPG106 (OPG106), found in Homo sapiens (Human).